The following is a 344-amino-acid chain: Type VI secretion system component TssA1 (344 aa).

In terms of assembly, homododecamer. Interacts with TssB1 and TssC1. Interacts with TssK1 and TssF1.

In terms of biological role, core component of the H1 type VI (H1-T6SS) secretion system that plays a role in the release of toxins targeting both eukaryotic and prokaryotic species. Forms a dodecameric ring-shaped structure located at one end of the T6SS sheath. May properly attach the pre-assembled sheath onto the baseplate and/or stabilize the sheaths tubular structure. The polypeptide is Type VI secretion system component TssA1 (Pseudomonas aeruginosa (strain ATCC 15692 / DSM 22644 / CIP 104116 / JCM 14847 / LMG 12228 / 1C / PRS 101 / PAO1)).